The primary structure comprises 86 residues: Small ribosomal subunit protein bS16 (86 aa).

It belongs to the bacterial ribosomal protein bS16 family.

This chain is Small ribosomal subunit protein bS16, found in Bordetella avium (strain 197N).